Consider the following 171-residue polypeptide: Peptide deformylase (171 aa).

Cys91 and His133 together coordinate Fe cation. Glu134 is an active-site residue. Fe cation is bound at residue His137.

Belongs to the polypeptide deformylase family. It depends on Fe(2+) as a cofactor.

The catalysed reaction is N-terminal N-formyl-L-methionyl-[peptide] + H2O = N-terminal L-methionyl-[peptide] + formate. Functionally, removes the formyl group from the N-terminal Met of newly synthesized proteins. Requires at least a dipeptide for an efficient rate of reaction. N-terminal L-methionine is a prerequisite for activity but the enzyme has broad specificity at other positions. The chain is Peptide deformylase from Sodalis glossinidius (strain morsitans).